A 1021-amino-acid polypeptide reads, in one-letter code: Sodium/potassium-transporting ATPase subunit alpha-1 (1021 aa).

A propeptide spanning residues 1-5 (MGKGV) is cleaved from the precursor. Positions 1–11 (MGKGVGRDKYE) are enriched in basic and acidic residues. The tract at residues 1–36 (MGKGVGRDKYEPAAVSEHGDKKKAKKERDMDELKKE) is disordered. The Cytoplasmic portion of the chain corresponds to 4–85 (GVGRDKYEPA…NALTPPPTTP (82 aa)). Lys9 carries the post-translational modification N6-acetyllysine. Tyr10 carries the post-translational modification Phosphotyrosine. A Phosphoserine; by PKC modification is found at Ser16. Lys21 is subject to N6-acetyllysine. Over residues 26 to 36 (KERDMDELKKE) the composition is skewed to basic and acidic residues. Phosphoserine is present on residues Ser38 and Ser45. The tract at residues 80–82 (PPP) is phosphoinositide-3 kinase binding. Residues 86–106 (EWVKFCRQLFGGFSMLLWIGA) form a helical membrane-spanning segment. Residues 107–129 (ILCFLAYGIQAATEEEPQNDNLY) lie on the Extracellular side of the membrane. A helical membrane pass occupies residues 130–150 (LGVVLSAVVIITGCFSYYQEA). The Cytoplasmic segment spans residues 151 to 286 (KSSKIMESFK…GGQTPIAAEI (136 aa)). Residues 214-233 (SSLTGESEPQTRSPDFTNEN) form a disordered region. At Ser226 the chain carries Phosphoserine. Phosphotyrosine is present on Tyr258. The helical transmembrane segment at 287–306 (EHFIHIITGVAVFLGVSFFI) threads the bilayer. Topologically, residues 307–318 (LSLILEYTWLEA) are extracellular. The chain crosses the membrane as a helical span at residues 319–336 (VIFLIGIIVANVPEGLLA). Topologically, residues 337-770 (TVTVCLTLTA…EEGRLIFDNL (434 aa)) are cytoplasmic. Asp374 functions as the 4-aspartylphosphate intermediate in the catalytic mechanism. 2 positions are modified to phosphoserine: Ser450 and Ser482. Lys485 lines the ATP pocket. Residue Tyr540 is modified to Phosphotyrosine. The interval 594-715 (RAAVPDAVGK…QGAIVAVTGD (122 aa)) is mediates interaction with SCN7A. Residue Lys659 is modified to N6-succinyllysine. Residues Ser666 and Ser673 each carry the phosphoserine modification. 2 residues coordinate Mg(2+): Asp715 and Asp719. Residues 771–790 (KKSIAYTLTSNIPEITPFLI) form a helical membrane-spanning segment. Residues 791-800 (FIIANIPLPL) are Extracellular-facing. Residues 801–821 (GTVTILCIDLGTDMVPAISLA) form a helical membrane-spanning segment. Topologically, residues 822–841 (YEQAESDIMKRQPRNPKTDK) are cytoplasmic. The helical transmembrane segment at 842-864 (LVNERLISMAYGQIGMIQALGGF) threads the bilayer. At 865 to 916 (FTYFVILAENGFLPTHLLGLRVDWDDRWINDVEDSYGQQWTYEQRKIVEFTC) the chain is on the extracellular side. The chain crosses the membrane as a helical span at residues 917–936 (HTAFFVSIVVVQWADLVICK). The Cytoplasmic segment spans residues 937-949 (TRRNSVFQQGMKN). Ser941 carries the post-translational modification Phosphoserine; by PKA. Residues 950–968 (KILIFGLFEETALAAFLSY) form a helical membrane-spanning segment. Topologically, residues 969–983 (CPGMGVALRMYPLKP) are extracellular. A helical membrane pass occupies residues 984 to 1004 (TWWFCAFPYSLLIFVYDEVRK). Residues 1005-1021 (LIIRRRPGGWVEKETYY) lie on the Cytoplasmic side of the membrane.

This sequence belongs to the cation transport ATPase (P-type) (TC 3.A.3) family. Type IIC subfamily. As to quaternary structure, the sodium/potassium-transporting ATPase is composed of a catalytic alpha subunit, an auxiliary non-catalytic beta subunit and an additional regulatory subunit. Interacts with regulatory subunit FXYD1. Interacts with regulatory subunit FXYD3. Interacts with SIK1. Interacts with SLC35G1 and STIM1. Interacts with CLN3; this interaction regulates the sodium/potassium-transporting ATPase complex localization at the plasma membrane. Interacts with SCN7A; activates ATP1A1 P-type sodium:potassium-exchanging transporter activity which indirectly signals to nearby neurons to regulate sodium homeostasis. Phosphorylation on Tyr-10 modulates pumping activity. Phosphorylation of Ser-941 by PKA modulates the response of ATP1A1 to PKC. Dephosphorylation by protein phosphatase 2A (PP2A) following increases in intracellular sodium, leading to increase catalytic activity.

It localises to the cell membrane. Its subcellular location is the basolateral cell membrane. The protein resides in the sarcolemma. The protein localises to the cell projection. It is found in the axon. It localises to the melanosome. It carries out the reaction K(+)(out) + Na(+)(in) + ATP + H2O = K(+)(in) + Na(+)(out) + ADP + phosphate + H(+). Its function is as follows. This is the catalytic component of the active enzyme, which catalyzes the hydrolysis of ATP coupled with the exchange of sodium and potassium ions across the plasma membrane. This action creates the electrochemical gradient of sodium and potassium ions, providing the energy for active transport of various nutrients. Could also be part of an osmosensory signaling pathway that senses body-fluid sodium levels and controls salt intake behavior as well as voluntary water intake to regulate sodium homeostasis. This is Sodium/potassium-transporting ATPase subunit alpha-1 (ATP1A1) from Canis lupus familiaris (Dog).